The chain runs to 213 residues: Pyridoxine/pyridoxamine 5'-phosphate oxidase (213 aa).

Substrate is bound by residues 8-11 and Lys66; that span reads RKNY. FMN-binding positions include 61 to 66, 76 to 77, Arg82, Lys83, and Gln105; these read RIVLIK and FT. Residues Tyr123, Arg127, and Ser131 each contribute to the substrate site. FMN is bound by residues 140 to 141 and Trp184; that span reads QS. 190 to 192 provides a ligand contact to substrate; it reads RLH. Arg194 is an FMN binding site.

This sequence belongs to the pyridoxamine 5'-phosphate oxidase family. Homodimer. Requires FMN as cofactor.

It catalyses the reaction pyridoxamine 5'-phosphate + O2 + H2O = pyridoxal 5'-phosphate + H2O2 + NH4(+). The enzyme catalyses pyridoxine 5'-phosphate + O2 = pyridoxal 5'-phosphate + H2O2. The protein operates within cofactor metabolism; pyridoxal 5'-phosphate salvage; pyridoxal 5'-phosphate from pyridoxamine 5'-phosphate: step 1/1. It functions in the pathway cofactor metabolism; pyridoxal 5'-phosphate salvage; pyridoxal 5'-phosphate from pyridoxine 5'-phosphate: step 1/1. Its function is as follows. Catalyzes the oxidation of either pyridoxine 5'-phosphate (PNP) or pyridoxamine 5'-phosphate (PMP) into pyridoxal 5'-phosphate (PLP). This is Pyridoxine/pyridoxamine 5'-phosphate oxidase from Paraburkholderia phytofirmans (strain DSM 17436 / LMG 22146 / PsJN) (Burkholderia phytofirmans).